Here is a 486-residue protein sequence, read N- to C-terminus: Malonate-semialdehyde dehydrogenase 2 (486 aa).

NAD(+) contacts are provided by Phe154, Lys178, Glu181, Arg182, and Ser231. Cys286 (nucleophile) is an active-site residue. Position 386 (Glu386) interacts with NAD(+).

It belongs to the aldehyde dehydrogenase family. IolA subfamily. As to quaternary structure, homotetramer.

It carries out the reaction 3-oxopropanoate + NAD(+) + CoA + H2O = hydrogencarbonate + acetyl-CoA + NADH + H(+). The enzyme catalyses 2-methyl-3-oxopropanoate + NAD(+) + CoA + H2O = propanoyl-CoA + hydrogencarbonate + NADH + H(+). The protein operates within polyol metabolism; myo-inositol degradation into acetyl-CoA; acetyl-CoA from myo-inositol: step 7/7. In terms of biological role, catalyzes the oxidation of malonate semialdehyde (MSA) and methylmalonate semialdehyde (MMSA) into acetyl-CoA and propanoyl-CoA, respectively. Is involved in a myo-inositol catabolic pathway. Bicarbonate, and not CO2, is the end-product of the enzymatic reaction. The protein is Malonate-semialdehyde dehydrogenase 2 of Oceanobacillus iheyensis (strain DSM 14371 / CIP 107618 / JCM 11309 / KCTC 3954 / HTE831).